The primary structure comprises 1836 residues: Sodium channel protein type 4 subunit alpha (1836 aa).

The Cytoplasmic segment spans residues 1–131 (MARPSLCTLV…RGAIKVLIHA (131 aa)). Residues 39 to 60 (LQRNKQMEIEEPERKPRSDLEA) show a composition bias toward basic and acidic residues. Positions 39–63 (LQRNKQMEIEEPERKPRSDLEAGKN) are disordered. Residues 113–454 (LLSPFSVVRR…VVAMAYAEQN (342 aa)) form an I repeat. A helical membrane pass occupies residues 132–150 (LFSMFIMITILTNCVFMTM). At 151–157 (SDPPPWS) the chain is on the extracellular side. The helical transmembrane segment at 158–178 (KNVEYTFTGIYTFESLIKILA) threads the bilayer. At 179–192 (RGFCVDDFTFLRDP) the chain is on the cytoplasmic side. Residues 193–210 (WNWLDFSVIMMAYLTEFV) form a helical membrane-spanning segment. Residues 211–216 (DLGNIS) are Extracellular-facing. Asparagine 214 carries an N-linked (GlcNAc...) asparagine glycan. Residues 217 to 233 (ALRTFRVLRALKTITVI) form a helical membrane-spanning segment. Over 234–252 (PGLKTIVGALIQSVKKLSD) the chain is Cytoplasmic. The chain crosses the membrane as a helical span at residues 253–272 (VMILTVFCLSVFALVGLQLF). The Extracellular portion of the chain corresponds to 273-391 (MGNLRQKCVR…PNYGYTSYDT (119 aa)). A disulfide bridge connects residues cysteine 280 and cysteine 360. Residues asparagine 288, asparagine 291, asparagine 297, asparagine 303, asparagine 315, asparagine 321, asparagine 333, and asparagine 362 are each glycosylated (N-linked (GlcNAc...) asparagine). Cysteine 369 and cysteine 375 are oxidised to a cystine. Residues 392–416 (FSWAFLALFRLMTQDYWENLFQLTL) constitute an intramembrane region (pore-forming). Topologically, residues 417–423 (RAAGKTY) are extracellular. Residues 424-444 (MIFFVVIIFLGSFYLINLILA) form a helical membrane-spanning segment. The Cytoplasmic portion of the chain corresponds to 445–578 (VVAMAYAEQN…NIIHLIVMDP (134 aa)). The interval 493–530 (GGEADGDPAHGKDCNGSLDTSQGEKGAPRQSSSGDSGI) is disordered. Residues 509 to 528 (SLDTSQGEKGAPRQSSSGDS) are compositionally biased toward polar residues. Residues 560 to 832 (CCAPWLKFKN…QIAIGRIKLG (273 aa)) form an II repeat. Residues 579–597 (FVDLGITICIVLNTLFMAM) form a helical membrane-spanning segment. The Extracellular segment spans residues 598 to 608 (EHYPMTEHFDN). The chain crosses the membrane as a helical span at residues 609-628 (VLTVGNLVFTGIFTAEMVLK). Residues 629-642 (LIAMDPYEYFQQGW) lie on the Cytoplasmic side of the membrane. A helical transmembrane segment spans residues 643 to 662 (NIFDSIIVTLSLVELGLANV). Residues 663-664 (QG) lie on the Extracellular side of the membrane. Residues 665–682 (LSVLRSFRLLRVFKLAKS) form a helical membrane-spanning segment. Residues 683–698 (WPTLNMLIKIIGNSVG) are Cytoplasmic-facing. Residues 699–717 (ALGNLTLVLAIIVFIFAVV) form a helical membrane-spanning segment. Over 718 to 746 (GMQLFGKSYKECVCKIALDCNLPRWHMHD) the chain is Extracellular. Cysteines 731 and 737 form a disulfide. The pore-forming intramembrane region spans 747-767 (FFHSFLIVFRILCGEWIETMW). Residues 768-778 (DCMEVAGQAMC) lie on the Extracellular side of the membrane. The cysteines at positions 769 and 778 are disulfide-linked. Residues 779 to 797 (LTVFLMVMVIGNLVVLNLF) traverse the membrane as a helical segment. Residues 798–1032 (LALLLSSFSA…ACFKIVEHNW (235 aa)) are Cytoplasmic-facing. 2 disordered regions span residues 863–885 (GAGEAGEAGETAPEDEKKEPPEE) and 930–992 (ESDL…QPEE). The segment covering 876–885 (EDEKKEPPEE) has biased composition (basic and acidic residues). 2 stretches are compositionally biased toward acidic residues: residues 930–947 (ESDLEMPTEEETDTFSEP) and 975–992 (EDPEEQAEENPEGEQPEE). An III repeat occupies 1013 to 1326 (RGKKWWTLRR…KKYYNAMKKL (314 aa)). A helical transmembrane segment spans residues 1033–1050 (FETFIVFMILLSSGALAF). Residues 1051–1063 (EDIYIEQRRVIRT) are Extracellular-facing. The helical transmembrane segment at 1064–1082 (ILEYADKVFTYIFIMEMLL) threads the bilayer. Over 1083–1096 (KWVAYGFKVYFTNA) the chain is Cytoplasmic. Residues 1097 to 1115 (WCWLDFLIVDVSIISLVAN) form a helical membrane-spanning segment. At 1116–1123 (WLGYSELG) the chain is on the extracellular side. Residues 1124-1142 (PIKSLRTLRALRPLRALSR) traverse the membrane as a helical segment. Over 1143 to 1159 (FEGMRVVVNALLGAIPS) the chain is Cytoplasmic. The chain crosses the membrane as a helical span at residues 1160-1179 (IMNVLLVCLIFWLIFSIMGV). Residues 1180 to 1230 (NLFAGKFYYCINTTTSERFDISEVNNKSECESLMHTGQVRWLNVKVNYDNV) are Extracellular-facing. Cysteine 1189 and cysteine 1209 are disulfide-bonded. Asparagine 1191 and asparagine 1205 each carry an N-linked (GlcNAc...) asparagine glycan. The segment at residues 1231–1252 (GLGYLSLLQVATFKGWMDIMYA) is an intramembrane region (pore-forming). Residues 1253-1269 (AVDSREKEEQPQYEVNL) lie on the Extracellular side of the membrane. The helical transmembrane segment at 1270-1291 (YMYLYFVIFIIFGSFFTLNLFI) threads the bilayer. Residues 1292 to 1354 (GVIIDNFNQQ…MVYDLVTKQA (63 aa)) lie on the Cytoplasmic side of the membrane. The important for rapid channel inactivation stretch occupies residues 1310 to 1312 (IFM). The stretch at 1335–1633 (IPRPQNKIQG…WEKFDPDATQ (299 aa)) is one IV repeat. A helical membrane pass occupies residues 1355–1372 (FDITIMILICLNMVTMMV). The Extracellular portion of the chain corresponds to 1373 to 1383 (ETDNQSQLKVD). The chain crosses the membrane as a helical span at residues 1384 to 1402 (ILYNINMIFIIIFTGECVL). The Cytoplasmic segment spans residues 1403–1414 (KMLALRQYYFTV). A helical transmembrane segment spans residues 1415–1432 (GWNIFDFVVVILSIVGLA). The Extracellular segment spans residues 1433 to 1445 (LSDLIQKYFVSPT). A helical transmembrane segment spans residues 1446–1462 (LFRVIRLARIGRVLRLI). Topologically, residues 1463–1481 (RGAKGIRTLLFALMMSLPA) are cytoplasmic. Residues 1482-1499 (LFNIGLLLFLVMFIYSIF) traverse the membrane as a helical segment. At 1500–1521 (GMSNFAYVKKESGIDDMFNFET) the chain is on the extracellular side. Residues 1522 to 1544 (FGNSIICLFEITTSAGWDGLLNP) constitute an intramembrane region (pore-forming). Residues 1545–1574 (ILNSGPPDCDPNLENPGTSVKGDCGNPSIG) lie on the Extracellular side of the membrane. An intrachain disulfide couples cysteine 1553 to cysteine 1568. A helical transmembrane segment spans residues 1575 to 1597 (ICFFCSYIIISFLIVVNMYIAII). Over 1598 to 1836 (LENFNVATEE…VRPGVKESLV (239 aa)) the chain is Cytoplasmic. Residues 1727 to 1756 (EEVCAIKIQRAYRRHLLQRSMKQASYMYRH) enclose the IQ domain. The tract at residues 1778–1836 (KMYGHENGNSSSPSPEEKGEAGDAGPTMGLMPISPSDTAWPPAPPPGQTVRPGVKESLV) is disordered.

The protein belongs to the sodium channel (TC 1.A.1.10) family. Nav1.4/SCN4A subfamily. In terms of assembly, the Nav1.4 voltage-gated sodium channel consists of an ion-conducting alpha subunit SCN4A which is functional on its own and a regulatory beta subunit SCN1B. SCN1B strongly enhances the presence of SCN4A at the cell surface. SCN1B is also required for rapid channel inactivation and recovery after inactivation. It prevents the decrease of channel activity in response to repetitive, high-frequency depolarizations. Interacts with the syntrophins SNTA1, SNTB1 and SNTB2 (via PDZ domain); probably links SCN4A to the actin cytoskeleton and the extracellular matrix via the dystrophin-associated protein complex and regulates its localization in muscle cells. Interacts with TMEM233; probable regulator of the channel.

It is found in the cell membrane. The catalysed reaction is Na(+)(in) = Na(+)(out). The channel is inhibited by tetrodotoxin and saxitoxin. Inhibited by the conotoxin GVIIJ. Pore-forming subunit of Nav1.4, a voltage-gated sodium (Nav) channel that directly mediates the depolarizing phase of action potentials in excitable membranes. Navs, also called VGSCs (voltage-gated sodium channels) or VDSCs (voltage-dependent sodium channels), operate by switching between closed and open conformations depending on the voltage difference across the membrane. In the open conformation they allow Na(+) ions to selectively pass through the pore, along their electrochemical gradient. The influx of Na+ ions provokes membrane depolarization, initiating the propagation of electrical signals throughout cells and tissues. Highly expressed in skeletal muscles, Nav1.4 generates the action potential crucial for muscle contraction. This is Sodium channel protein type 4 subunit alpha from Homo sapiens (Human).